The primary structure comprises 525 residues: Bifunctional purine biosynthesis protein PurH (525 aa).

The MGS-like domain maps to 1–148; that stretch reads MPSNNLIKNA…KNYKNVIVIV (148 aa).

This sequence belongs to the PurH family.

The enzyme catalyses (6R)-10-formyltetrahydrofolate + 5-amino-1-(5-phospho-beta-D-ribosyl)imidazole-4-carboxamide = 5-formamido-1-(5-phospho-D-ribosyl)imidazole-4-carboxamide + (6S)-5,6,7,8-tetrahydrofolate. The catalysed reaction is IMP + H2O = 5-formamido-1-(5-phospho-D-ribosyl)imidazole-4-carboxamide. It participates in purine metabolism; IMP biosynthesis via de novo pathway; 5-formamido-1-(5-phospho-D-ribosyl)imidazole-4-carboxamide from 5-amino-1-(5-phospho-D-ribosyl)imidazole-4-carboxamide (10-formyl THF route): step 1/1. Its pathway is purine metabolism; IMP biosynthesis via de novo pathway; IMP from 5-formamido-1-(5-phospho-D-ribosyl)imidazole-4-carboxamide: step 1/1. This is Bifunctional purine biosynthesis protein PurH from Buchnera aphidicola subsp. Acyrthosiphon pisum (strain 5A).